The chain runs to 228 residues: ATP synthase subunit beta, mitochondrial (228 aa).

Residues 1–31 constitute a mitochondrion transit peptide; it reads MFALRAAAKADKNLLPFLGQLSRSHAAKAAK. 183 to 190 provides a ligand contact to ATP; the sequence is GGAGVGKT.

It belongs to the ATPase alpha/beta chains family. As to quaternary structure, F-type ATPases have 2 components, CF(1) - the catalytic core - and CF(0) - the membrane proton channel. CF(1) has five subunits: alpha(3), beta(3), gamma(1), delta(1), epsilon(1). CF(0) has three main subunits: a, b and c.

It localises to the mitochondrion. The protein localises to the mitochondrion inner membrane. It catalyses the reaction ATP + H2O + 4 H(+)(in) = ADP + phosphate + 5 H(+)(out). Mitochondrial membrane ATP synthase (F(1)F(0) ATP synthase or Complex V) produces ATP from ADP in the presence of a proton gradient across the membrane which is generated by electron transport complexes of the respiratory chain. F-type ATPases consist of two structural domains, F(1) - containing the extramembraneous catalytic core, and F(0) - containing the membrane proton channel, linked together by a central stalk and a peripheral stalk. During catalysis, ATP synthesis in the catalytic domain of F(1) is coupled via a rotary mechanism of the central stalk subunits to proton translocation. Subunits alpha and beta form the catalytic core in F(1). Rotation of the central stalk against the surrounding alpha(3)beta(3) subunits leads to hydrolysis of ATP in three separate catalytic sites on the beta subunits. The protein is ATP synthase subunit beta, mitochondrial of Drosophila virilis (Fruit fly).